The primary structure comprises 653 residues: ATP-dependent zinc metalloprotease FtsH 1 (653 aa).

The tract at residues 1–20 (MPENKNDKENKNDKENKNTK) is disordered. Residues 1–30 (MPENKNDKENKNDKENKNTKEEKKKVKFSN) lie on the Cytoplasmic side of the membrane. A helical membrane pass occupies residues 31–51 (IIWVYIIFAVFFIGALISLNW). At 52–126 (ENNPIISYSE…EYVESVGTKW (75 aa)) the chain is on the periplasmic side. A helical membrane pass occupies residues 127-147 (WFGLLINIIPIVVMVLFFFWL). Topologically, residues 148–653 (YRSASAGARS…VVNHVNYQPV (506 aa)) are cytoplasmic. Position 219 to 226 (219 to 226 (GPPGTGKT)) interacts with ATP. H441 serves as a coordination point for Zn(2+). E442 is an active-site residue. 2 residues coordinate Zn(2+): H445 and D518.

This sequence in the central section; belongs to the AAA ATPase family. The protein in the C-terminal section; belongs to the peptidase M41 family. Homohexamer. Zn(2+) serves as cofactor.

Its subcellular location is the cell inner membrane. Acts as a processive, ATP-dependent zinc metallopeptidase for both cytoplasmic and membrane proteins. Plays a role in the quality control of integral membrane proteins. The chain is ATP-dependent zinc metalloprotease FtsH 1 from Petrotoga mobilis (strain DSM 10674 / SJ95).